A 31-amino-acid polypeptide reads, in one-letter code: Cytochrome b6-f complex subunit 6 (31 aa).

Residues 4 to 24 (VISYFGFLLVALAFTLVTYLG) traverse the membrane as a helical segment.

Belongs to the PetL family. In terms of assembly, the 4 large subunits of the cytochrome b6-f complex are cytochrome b6, subunit IV (17 kDa polypeptide, PetD), cytochrome f and the Rieske protein, while the 4 small subunits are PetG, PetL, PetM and PetN. The complex functions as a dimer.

Its subcellular location is the plastid. The protein localises to the chloroplast thylakoid membrane. Component of the cytochrome b6-f complex, which mediates electron transfer between photosystem II (PSII) and photosystem I (PSI), cyclic electron flow around PSI, and state transitions. PetL is important for photoautotrophic growth as well as for electron transfer efficiency and stability of the cytochrome b6-f complex. The protein is Cytochrome b6-f complex subunit 6 of Nephroselmis olivacea (Green alga).